We begin with the raw amino-acid sequence, 239 residues long: Phosducin-like protein 3 (239 aa).

Met-1 is modified (N-acetylmethionine). The Phosducin domain occupies 32 to 180 (EAEEEQRILQ…EGDIKAQFIG (149 aa)). Residues Ser-43, Ser-234, and Ser-236 each carry the phosphoserine modification. A thioredoxin fold region spans residues 91-239 (FGEVLEISGK…MKRDSDSEGD (149 aa)).

Belongs to the phosducin family. Interacts (via thioredoxin fold region) with KDR/VEGFR2 (via juxtamembrane domain). Forms ternary complexes with the chaperonin CCT complex and actin substrate, leading to inhibition of actin folding. Interacts with XIAP (via BIR 3 and RING domain). Interacts with HSP90AA1 and HSP90AB1. In terms of processing, N-terminal methionine acetylation destabilizes the protein.

Its subcellular location is the cytoplasm. The protein resides in the perinuclear region. It is found in the endoplasmic reticulum. In terms of biological role, acts as a chaperone for the angiogenic VEGF receptor KDR/VEGFR2, increasing its abundance by inhibiting its ubiquitination and degradation. Inhibits the folding activity of the chaperonin-containing T-complex (CCT) which leads to inhibition of cytoskeletal actin folding. Acts as a chaperone during heat shock alongside HSP90 and HSP40/70 chaperone complexes. Modulates the activation of caspases during apoptosis. The sequence is that of Phosducin-like protein 3 (PDCL3) from Pongo abelii (Sumatran orangutan).